We begin with the raw amino-acid sequence, 466 residues long: tRNA modification GTPase MnmE (466 aa).

(6S)-5-formyl-5,6,7,8-tetrahydrofolate contacts are provided by Arg24, Glu85, and Lys128. Positions 224-384 (GLNIVLAGQP…LRTELLHLVG (161 aa)) constitute a TrmE-type G domain. Residue Asn234 participates in K(+) binding. GTP is bound by residues 234–239 (NVGKSS), 253–259 (TPIAGTT), and 278–281 (DTAG). Ser238 provides a ligand contact to Mg(2+). Residues Thr253, Ile255, and Thr258 each coordinate K(+). Residue Thr259 coordinates Mg(2+). Residue Lys466 coordinates (6S)-5-formyl-5,6,7,8-tetrahydrofolate.

Belongs to the TRAFAC class TrmE-Era-EngA-EngB-Septin-like GTPase superfamily. TrmE GTPase family. Homodimer. Heterotetramer of two MnmE and two MnmG subunits. It depends on K(+) as a cofactor.

The protein resides in the cytoplasm. Functionally, exhibits a very high intrinsic GTPase hydrolysis rate. Involved in the addition of a carboxymethylaminomethyl (cmnm) group at the wobble position (U34) of certain tRNAs, forming tRNA-cmnm(5)s(2)U34. This Herminiimonas arsenicoxydans protein is tRNA modification GTPase MnmE.